Here is an 81-residue protein sequence, read N- to C-terminus: MTDPFTNPDKTLDAQGLRCPEPVMMVRKTVRQMETGQTLLIIADDPATTRDIPGFCVYMEHELLAQETEQVPYRYLLRKGQ.

The active-site Cysteine persulfide intermediate is the Cys19.

This sequence belongs to the sulfur carrier protein TusA family. Interacts with IscS.

It is found in the cytoplasm. It functions in the pathway tRNA modification. Its function is as follows. Sulfur carrier protein involved in sulfur trafficking in the cell. Part of a sulfur-relay system required for 2-thiolation during synthesis of 2-thiouridine of the modified wobble base 5-methylaminomethyl-2-thiouridine (mnm(5)s(2)U) in tRNA. Interacts with IscS and stimulates its cysteine desulfurase activity. Accepts an activated sulfur from IscS, which is then transferred to TusD, and thus determines the direction of sulfur flow from IscS to 2-thiouridine formation. Also appears to be involved in sulfur transfer for the biosynthesis of molybdopterin. This chain is Sulfur carrier protein TusA, found in Pectobacterium atrosepticum (strain SCRI 1043 / ATCC BAA-672) (Erwinia carotovora subsp. atroseptica).